Consider the following 300-residue polypeptide: MSDLTELTAEDKANVLVEALPWLQKWHGALVVLKYGGNAMVDEDLKRAFAEDVVFLRTAGLRPVVVHGGGPQISTMLDRLQIPSEFRGGLRVTTPEAMDVVRMVLTGQVGRELVGLLNAHGPLAVGLSGEDAGLLRATRRHAVVDGEPVDVGLVGDVVGVDPRAVVDLLAAGRIPVISTIAPEVDADGNPLHGQVLNVNADTAASAIAVALEAQKFVVMTDVAGLYRDWPNRDSLVREITAGDLAALLPSLESGMVPKMEACLRAVRGGVPRATVIDGRQAHSVLLEVFTTSGNGTMVVP.

Substrate is bound by residues 69-70 (GG), Arg91, and Asn197.

It belongs to the acetylglutamate kinase family. ArgB subfamily.

It localises to the cytoplasm. It carries out the reaction N-acetyl-L-glutamate + ATP = N-acetyl-L-glutamyl 5-phosphate + ADP. It participates in amino-acid biosynthesis; L-arginine biosynthesis; N(2)-acetyl-L-ornithine from L-glutamate: step 2/4. Its function is as follows. Catalyzes the ATP-dependent phosphorylation of N-acetyl-L-glutamate. The chain is Acetylglutamate kinase from Kineococcus radiotolerans (strain ATCC BAA-149 / DSM 14245 / SRS30216).